The following is a 295-amino-acid chain: 4-diphosphocytidyl-2-C-methyl-D-erythritol kinase (295 aa).

The active site involves lysine 25. 108 to 118 (PMGSGLGGGSS) contacts ATP. Residue aspartate 150 is part of the active site.

This sequence belongs to the GHMP kinase family. IspE subfamily.

It catalyses the reaction 4-CDP-2-C-methyl-D-erythritol + ATP = 4-CDP-2-C-methyl-D-erythritol 2-phosphate + ADP + H(+). Its pathway is isoprenoid biosynthesis; isopentenyl diphosphate biosynthesis via DXP pathway; isopentenyl diphosphate from 1-deoxy-D-xylulose 5-phosphate: step 3/6. Its function is as follows. Catalyzes the phosphorylation of the position 2 hydroxy group of 4-diphosphocytidyl-2C-methyl-D-erythritol. In Pasteurella multocida (strain Pm70), this protein is 4-diphosphocytidyl-2-C-methyl-D-erythritol kinase.